A 257-amino-acid chain; its full sequence is Glutamate racemase (257 aa).

Residues 12–13 (DS) and 44–45 (YG) each bind substrate. Cys75 (proton donor/acceptor) is an active-site residue. Residue 76 to 77 (NT) coordinates substrate. The Proton donor/acceptor role is filled by Cys176. 177 to 178 (TH) is a substrate binding site.

This sequence belongs to the aspartate/glutamate racemases family.

The catalysed reaction is L-glutamate = D-glutamate. The protein operates within cell wall biogenesis; peptidoglycan biosynthesis. In terms of biological role, provides the (R)-glutamate required for cell wall biosynthesis. The protein is Glutamate racemase of Thermus thermophilus (strain ATCC BAA-163 / DSM 7039 / HB27).